We begin with the raw amino-acid sequence, 469 residues long: ATP synthase subunit beta (469 aa).

155–162 (GGAGVGKT) serves as a coordination point for ATP.

Belongs to the ATPase alpha/beta chains family. In terms of assembly, F-type ATPases have 2 components, CF(1) - the catalytic core - and CF(0) - the membrane proton channel. CF(1) has five subunits: alpha(3), beta(3), gamma(1), delta(1), epsilon(1). CF(0) has three main subunits: a(1), b(2) and c(9-12). The alpha and beta chains form an alternating ring which encloses part of the gamma chain. CF(1) is attached to CF(0) by a central stalk formed by the gamma and epsilon chains, while a peripheral stalk is formed by the delta and b chains.

It localises to the cell inner membrane. It catalyses the reaction ATP + H2O + 4 H(+)(in) = ADP + phosphate + 5 H(+)(out). Functionally, produces ATP from ADP in the presence of a proton gradient across the membrane. The catalytic sites are hosted primarily by the beta subunits. In Helicobacter pylori (strain P12), this protein is ATP synthase subunit beta.